The chain runs to 179 residues: Methylated-DNA--protein-cysteine methyltransferase, inducible (179 aa).

C141 functions as the Nucleophile; methyl group acceptor in the catalytic mechanism.

The protein belongs to the MGMT family.

The catalysed reaction is a 6-O-methyl-2'-deoxyguanosine in DNA + L-cysteinyl-[protein] = S-methyl-L-cysteinyl-[protein] + a 2'-deoxyguanosine in DNA. The enzyme catalyses a 4-O-methyl-thymidine in DNA + L-cysteinyl-[protein] = a thymidine in DNA + S-methyl-L-cysteinyl-[protein]. In terms of biological role, involved in the cellular defense against the biological effects of O6-methylguanine (O6-MeG) and O4-methylthymine (O4-MeT) in DNA. Repairs the methylated nucleobase in DNA by stoichiometrically transferring the methyl group to a cysteine residue in the enzyme. This is a suicide reaction: the enzyme is irreversibly inactivated. The sequence is that of Methylated-DNA--protein-cysteine methyltransferase, inducible (adaB) from Bacillus subtilis (strain 168).